The primary structure comprises 507 residues: MLNADLKQQLKQLLELMEGNVEFVASLGSDEKSKELKELLTEISDMSPRLSLSEKSLKRTPSFSVNRPGEETGVTFAGIPLGHEFNSLVLAILQVSGRAPKEKQSIIDQIKNLEGSFHFETFISLTCQKCPDVVQALNLMSVINPNITHSMIDGAVFREESENIMAVPAVFLNGEEFGNGRMTIQDILSKLGSTADASEFENKEPYDVLIVGGGPASGSAAIYTARKGLRTGIVADRIGGQVNDTAGIENFITVKETTGSEFSSNLAAHIDQYDIDAMTGIRATDIEKTDEAIKVTLENGAVLESKTVIIATGAGWRKLNIPGEEQLINKGVAFCPHCDGPLFENKDVAVIGGGNSGVEAAIDLAGIVNHVTLFEFASELKADNVLQDRLRSLSNVDIKTNAKTTEVVGEDHVTGIRYEDMSTGEEHLLNLDGIFVQIGLLPNTSWLKDAVELNERGEIVIDCNNNTNVPGIFAAGDVTDQKNKQIIISMGAGANAALNAFDYIIRN.

207–222 (DVLIVGGGPASGSAAI) provides a ligand contact to FAD. C335 and C338 are joined by a disulfide. 347–361 (DVAVIGGGNSGVEAA) is a binding site for NAD(+). Residue 467-477 (TNVPGIFAAGD) participates in FAD binding.

It belongs to the class-II pyridine nucleotide-disulfide oxidoreductase family. As to quaternary structure, homodimer. It depends on FAD as a cofactor.

Its function is as follows. Serves to protect the cell against DNA damage by alkyl hydroperoxides. It can use either NADH or NADPH as electron donor for direct reduction of redox dyes or of alkyl hydroperoxides when combined with the AhpC protein. The polypeptide is Alkyl hydroperoxide reductase subunit F (ahpF) (Staphylococcus aureus (strain MSSA476)).